We begin with the raw amino-acid sequence, 171 residues long: Shikimate kinase (171 aa).

13 to 18 (GVGKST) serves as a coordination point for ATP. Ser-17 is a Mg(2+) binding site. Substrate-binding residues include Asp-35, Arg-59, and Gly-81. Arg-118 lines the ATP pocket. Arg-136 contributes to the substrate binding site. Residue Arg-153 coordinates ATP.

This sequence belongs to the shikimate kinase family. In terms of assembly, monomer. The cofactor is Mg(2+).

The protein localises to the cytoplasm. It carries out the reaction shikimate + ATP = 3-phosphoshikimate + ADP + H(+). Its pathway is metabolic intermediate biosynthesis; chorismate biosynthesis; chorismate from D-erythrose 4-phosphate and phosphoenolpyruvate: step 5/7. Its function is as follows. Catalyzes the specific phosphorylation of the 3-hydroxyl group of shikimic acid using ATP as a cosubstrate. In Streptomyces avermitilis (strain ATCC 31267 / DSM 46492 / JCM 5070 / NBRC 14893 / NCIMB 12804 / NRRL 8165 / MA-4680), this protein is Shikimate kinase.